Here is a 65-residue protein sequence, read N- to C-terminus: Large ribosomal subunit protein uL29 (65 aa).

Belongs to the universal ribosomal protein uL29 family.

In Buchnera aphidicola subsp. Schizaphis graminum (strain Sg), this protein is Large ribosomal subunit protein uL29.